The sequence spans 210 residues: Histidine biosynthesis bifunctional protein HisIE (210 aa).

The tract at residues M1 to W121 is phosphoribosyl-AMP cyclohydrolase. The interval L122 to K210 is phosphoribosyl-ATP pyrophosphohydrolase.

In the N-terminal section; belongs to the PRA-CH family. This sequence in the C-terminal section; belongs to the PRA-PH family.

The protein localises to the cytoplasm. It carries out the reaction 1-(5-phospho-beta-D-ribosyl)-ATP + H2O = 1-(5-phospho-beta-D-ribosyl)-5'-AMP + diphosphate + H(+). The catalysed reaction is 1-(5-phospho-beta-D-ribosyl)-5'-AMP + H2O = 1-(5-phospho-beta-D-ribosyl)-5-[(5-phospho-beta-D-ribosylamino)methylideneamino]imidazole-4-carboxamide. It functions in the pathway amino-acid biosynthesis; L-histidine biosynthesis; L-histidine from 5-phospho-alpha-D-ribose 1-diphosphate: step 2/9. The protein operates within amino-acid biosynthesis; L-histidine biosynthesis; L-histidine from 5-phospho-alpha-D-ribose 1-diphosphate: step 3/9. This chain is Histidine biosynthesis bifunctional protein HisIE (hisI), found in Vibrio cholerae serotype O1 (strain ATCC 39315 / El Tor Inaba N16961).